Here is a 599-residue protein sequence, read N- to C-terminus: MKNIRNFSIIAHIDHGKSTLSDRIIQICGGLSDREMEAQVLDSMDLERERGITIKAQSVTLDFKASDGETYQLNFIDTPGHVDFSYEVSRSLAACEGALLVVDAGQGVEAQTLANCYTAMEMDLEVVPVLNKIDLPAADPERVAEEIEDIVGIDATDAVRCSAKTGVGVTDVLERLVRDIPPPQGDPDGPLQALIIDSWFDNYLGVVSLVRIKNGTMRKGDKIKVMSTRQTYNADRLGIFTPKQVDRTELKCGEVGWLVCAIKDILGAPVGDTLTSARNPAEKALPGFKKVKPQVYAGLFPVSSDDYESFRDALGKLSLNDASLFYEPESSSALGFGFRCGFLGLLHMEIIQERLEREYDLDLITTAPTVVYEVETTAKETIYVDSPSKLPPLNNIYELREPIAECHMLLPQAYLGNVITLCIEKRGVQTNMVYHGNQVALTYEIPMAEVVLDFFDRLKSTSRGYASLDYNFKRFQASDMVRVDVLINNERVDALALITHRDNSQSRGRELVEKMKDLIPRQQFDIAIQAAIGTHIIARSTVKQLRKNVLAKCYGGDISRKKKLLQKQKEGKKRMKQIGNVELPQEAFLAILHVGKDNK.

In terms of domain architecture, tr-type G spans 2-184; it reads KNIRNFSIIA…RLVRDIPPPQ (183 aa). Residues 14-19 and 131-134 each bind GTP; these read DHGKST and NKID.

It belongs to the TRAFAC class translation factor GTPase superfamily. Classic translation factor GTPase family. LepA subfamily.

It localises to the cell inner membrane. The enzyme catalyses GTP + H2O = GDP + phosphate + H(+). In terms of biological role, required for accurate and efficient protein synthesis under certain stress conditions. May act as a fidelity factor of the translation reaction, by catalyzing a one-codon backward translocation of tRNAs on improperly translocated ribosomes. Back-translocation proceeds from a post-translocation (POST) complex to a pre-translocation (PRE) complex, thus giving elongation factor G a second chance to translocate the tRNAs correctly. Binds to ribosomes in a GTP-dependent manner. The sequence is that of Elongation factor 4 from Salmonella paratyphi A (strain ATCC 9150 / SARB42).